The chain runs to 543 residues: Chaperonin GroEL (543 aa).

Residues 29-32 (TLGP), 86-90 (DGTTT), Gly413, 476-478 (NAA), and Asp492 each bind ATP.

Belongs to the chaperonin (HSP60) family. In terms of assembly, forms a cylinder of 14 subunits composed of two heptameric rings stacked back-to-back. Interacts with the co-chaperonin GroES.

The protein localises to the cytoplasm. The enzyme catalyses ATP + H2O + a folded polypeptide = ADP + phosphate + an unfolded polypeptide.. In terms of biological role, together with its co-chaperonin GroES, plays an essential role in assisting protein folding. The GroEL-GroES system forms a nano-cage that allows encapsulation of the non-native substrate proteins and provides a physical environment optimized to promote and accelerate protein folding. In Streptococcus pyogenes serotype M49 (strain NZ131), this protein is Chaperonin GroEL.